Here is a 442-residue protein sequence, read N- to C-terminus: ATP-dependent protease ATPase subunit HslU (442 aa).

Residues Ile-18 and Gly-60 to Glu-65 each bind ATP. The disordered stretch occupies residues Asp-133–Gln-156. ATP is bound by residues Asp-255, Glu-320, and Arg-392.

Belongs to the ClpX chaperone family. HslU subfamily. A double ring-shaped homohexamer of HslV is capped on each side by a ring-shaped HslU homohexamer. The assembly of the HslU/HslV complex is dependent on binding of ATP.

The protein resides in the cytoplasm. Functionally, ATPase subunit of a proteasome-like degradation complex; this subunit has chaperone activity. The binding of ATP and its subsequent hydrolysis by HslU are essential for unfolding of protein substrates subsequently hydrolyzed by HslV. HslU recognizes the N-terminal part of its protein substrates and unfolds these before they are guided to HslV for hydrolysis. In Shewanella sp. (strain ANA-3), this protein is ATP-dependent protease ATPase subunit HslU.